The sequence spans 1399 residues: DNA-directed RNA polymerase subunit beta' (1399 aa).

The Zn(2+) site is built by cysteine 70, cysteine 72, cysteine 85, and cysteine 88. Aspartate 460, aspartate 462, and aspartate 464 together coordinate Mg(2+). 4 residues coordinate Zn(2+): cysteine 814, cysteine 888, cysteine 895, and cysteine 898.

Belongs to the RNA polymerase beta' chain family. In terms of assembly, the RNAP catalytic core consists of 2 alpha, 1 beta, 1 beta' and 1 omega subunit. When a sigma factor is associated with the core the holoenzyme is formed, which can initiate transcription. Mg(2+) serves as cofactor. It depends on Zn(2+) as a cofactor.

It catalyses the reaction RNA(n) + a ribonucleoside 5'-triphosphate = RNA(n+1) + diphosphate. Its function is as follows. DNA-dependent RNA polymerase catalyzes the transcription of DNA into RNA using the four ribonucleoside triphosphates as substrates. In Pseudomonas putida (strain GB-1), this protein is DNA-directed RNA polymerase subunit beta'.